The primary structure comprises 227 residues: MAYPFQLGFQDAASPIMEELLHFHDHTLMIVFLISSLVLYIITLMLTTKLTHTSTMDAQEVETVWTILPAIILILIALPSLRILYMMDEVNNPSLTVKTMGHQWYWSYEYTDYEDLSFDSYMIPTSDLKPGELRLLEVDNRVVLPMEMTIRMLVSSEDVLHSWAVPSLGLKTDAIPGRLNQTTLMSTRPGLFYGQCSEICGSNHSFMPIVLELVPLEVFEKWSVSML.

Topologically, residues 1 to 14 are mitochondrial intermembrane; the sequence is MAYPFQLGFQDAAS. The chain crosses the membrane as a helical span at residues 15 to 45; that stretch reads PIMEELLHFHDHTLMIVFLISSLVLYIITLM. Residues 46 to 59 are Mitochondrial matrix-facing; it reads LTTKLTHTSTMDAQ. Residues 60-87 traverse the membrane as a helical segment; sequence EVETVWTILPAIILILIALPSLRILYMM. At 88–227 the chain is on the mitochondrial intermembrane side; that stretch reads DEVNNPSLTV…VFEKWSVSML (140 aa). Cu cation contacts are provided by histidine 161, cysteine 196, glutamate 198, cysteine 200, histidine 204, and methionine 207. Glutamate 198 is a Mg(2+) binding site.

The protein belongs to the cytochrome c oxidase subunit 2 family. Component of the cytochrome c oxidase (complex IV, CIV), a multisubunit enzyme composed of 14 subunits. The complex is composed of a catalytic core of 3 subunits MT-CO1, MT-CO2 and MT-CO3, encoded in the mitochondrial DNA, and 11 supernumerary subunits COX4I, COX5A, COX5B, COX6A, COX6B, COX6C, COX7A, COX7B, COX7C, COX8 and NDUFA4, which are encoded in the nuclear genome. The complex exists as a monomer or a dimer and forms supercomplexes (SCs) in the inner mitochondrial membrane with NADH-ubiquinone oxidoreductase (complex I, CI) and ubiquinol-cytochrome c oxidoreductase (cytochrome b-c1 complex, complex III, CIII), resulting in different assemblies (supercomplex SCI(1)III(2)IV(1) and megacomplex MCI(2)III(2)IV(2)). Found in a complex with TMEM177, COA6, COX18, COX20, SCO1 and SCO2. Interacts with TMEM177 in a COX20-dependent manner. Interacts with COX20. Interacts with COX16. Cu cation serves as cofactor.

It is found in the mitochondrion inner membrane. The catalysed reaction is 4 Fe(II)-[cytochrome c] + O2 + 8 H(+)(in) = 4 Fe(III)-[cytochrome c] + 2 H2O + 4 H(+)(out). Functionally, component of the cytochrome c oxidase, the last enzyme in the mitochondrial electron transport chain which drives oxidative phosphorylation. The respiratory chain contains 3 multisubunit complexes succinate dehydrogenase (complex II, CII), ubiquinol-cytochrome c oxidoreductase (cytochrome b-c1 complex, complex III, CIII) and cytochrome c oxidase (complex IV, CIV), that cooperate to transfer electrons derived from NADH and succinate to molecular oxygen, creating an electrochemical gradient over the inner membrane that drives transmembrane transport and the ATP synthase. Cytochrome c oxidase is the component of the respiratory chain that catalyzes the reduction of oxygen to water. Electrons originating from reduced cytochrome c in the intermembrane space (IMS) are transferred via the dinuclear copper A center (CU(A)) of subunit 2 and heme A of subunit 1 to the active site in subunit 1, a binuclear center (BNC) formed by heme A3 and copper B (CU(B)). The BNC reduces molecular oxygen to 2 water molecules using 4 electrons from cytochrome c in the IMS and 4 protons from the mitochondrial matrix. In Balaenoptera physalus (Fin whale), this protein is Cytochrome c oxidase subunit 2 (MT-CO2).